Here is a 417-residue protein sequence, read N- to C-terminus: Dihydroorotase (417 aa).

2 residues coordinate Zn(2+): histidine 60 and histidine 62. Substrate contacts are provided by residues histidine 62 to arginine 64 and asparagine 94. Zn(2+) is bound by residues lysine 138, histidine 167, histidine 207, and aspartate 275. Lysine 138 bears the N6-carboxylysine mark. Residue aspartate 275 is part of the active site. Substrate contacts are provided by residues histidine 279 and alanine 289–glycine 290.

The protein belongs to the metallo-dependent hydrolases superfamily. DHOase family. Class I DHOase subfamily. The cofactor is Zn(2+).

It carries out the reaction (S)-dihydroorotate + H2O = N-carbamoyl-L-aspartate + H(+). It functions in the pathway pyrimidine metabolism; UMP biosynthesis via de novo pathway; (S)-dihydroorotate from bicarbonate: step 3/3. In terms of biological role, catalyzes the reversible cyclization of carbamoyl aspartate to dihydroorotate. The polypeptide is Dihydroorotase (Pyrococcus horikoshii (strain ATCC 700860 / DSM 12428 / JCM 9974 / NBRC 100139 / OT-3)).